A 311-amino-acid polypeptide reads, in one-letter code: Fucose-specific lectin (311 aa).

A run of 6 repeats spans residues 1-53 (MSTP…KNVI), 54-103 (AKAK…AGAK), 104-151 (FTVA…EGTN), 152-209 (LGVA…FDKA), 210-256 (PPRC…DKRT), and 257-311 (ITPV…PPAE). The tract at residues 1 to 311 (MSTPGAQEVL…LGRRALPPAE (311 aa)) is 6 X approximate tandem repeats. 16 residues coordinate beta-L-fucose: Arg25, Glu37, Trp44, Arg73, Glu85, Trp94, Arg126, Glu138, Trp146, Arg177, Gln189, Trp198, Arg230, Gln242, Arg277, and Glu291.

The protein belongs to the fungal fucose-specific lectin family. In terms of assembly, homodimer.

Functionally, lectin that specifically binds to L-fucose and weakly reacts with mannose and N-acetyl-neuraminic acid. Has strongest preference for the alpha-1,6-fucosylated chain (core fucose) on glycoproteins among alpha-1,2-, alpha-1,3-, alpha-1,4-, and alpha-1,6-fucosylated chains. Binds to fucose residues of IgE in mice and human, causing antigen-independent IgE-mediated mast cell activation and anaphylactoid reactions in mice and is possibly implicated in allergic response to Aspergillus oryzae in humans. Induces secretion of pro-inflammatory cytokines IL6 and IL8 implicated in ocular diseases such as mycotic keratitis, probably through its interaction with host toll-like receptors TLR2 and TLR4, followed by up-regulation of pro-inflammatory cytokines. This Aspergillus oryzae (strain ATCC 42149 / RIB 40) (Yellow koji mold) protein is Fucose-specific lectin.